A 278-amino-acid polypeptide reads, in one-letter code: Undecaprenyl-diphosphatase (278 aa).

The next 8 membrane-spanning stretches (helical) occupy residues 3-23 (YILI…IPIS), 42-62 (VAYS…IFYF), 88-108 (FLVI…LFVI), 112-132 (ILGL…IVIY), 152-172 (IIIV…RSGM), 190-210 (LSFI…VLFS), 225-245 (GLLI…NALL), and 253-273 (VVLL…LSDI).

The protein belongs to the UppP family.

The protein localises to the cell membrane. The catalysed reaction is di-trans,octa-cis-undecaprenyl diphosphate + H2O = di-trans,octa-cis-undecaprenyl phosphate + phosphate + H(+). Its function is as follows. Catalyzes the dephosphorylation of undecaprenyl diphosphate (UPP). The protein is Undecaprenyl-diphosphatase of Saccharolobus solfataricus (strain ATCC 35092 / DSM 1617 / JCM 11322 / P2) (Sulfolobus solfataricus).